The sequence spans 216 residues: NKG2-D type II integral membrane protein (216 aa).

The Cytoplasmic portion of the chain corresponds to 1 to 51; that stretch reads MGWIRGRRPRHNLEMSEFHNYKLGLAKSDFSTRCQKQRCPVIKSKCRENAS. A helical; Signal-anchor for type II membrane protein membrane pass occupies residues 52 to 72; it reads PLFFCCFIAVAMGIRFIIMVT. At 73–216 the chain is on the extracellular side; sequence IWSAVFLNSL…NTYICMQRTV (144 aa). 2 disulfides stabilise this stretch: cysteine 96–cysteine 105 and cysteine 99–cysteine 110. The 116-residue stretch at 98–213 folds into the C-type lectin domain; it reads PCPKNWICYK…SIPNTYICMQ (116 aa). N-linked (GlcNAc...) asparagine glycosylation is found at asparagine 115, asparagine 131, asparagine 163, and asparagine 202. 2 disulfide bridges follow: cysteine 127/cysteine 211 and cysteine 189/cysteine 203.

As to quaternary structure, homodimer; disulfide-linked. Heterohexamer composed of two subunits of KLRK1 and four subunits of HCST/DAP10. Interacts (via transmembrane domain) with HCST/DAP10 (via transmembrane domain); the interaction is required for KLRK1 NK cell surface and induces NK cell-mediated cytotoxicity. Can form disulfide-bonded heterodimer with CD94. Interacts with CEACAM1; recruits PTPN6 that dephosphorylates VAV1. As to expression, natural killer cells.

Its subcellular location is the cell membrane. Functionally, functions as an activating and costimulatory receptor involved in immunosurveillance upon binding to various cellular stress-inducible ligands displayed at the surface of autologous tumor cells and virus-infected cells. Provides both stimulatory and costimulatory innate immune responses on activated killer (NK) cells, leading to cytotoxic activity. Acts as a costimulatory receptor for T-cell receptor (TCR) in CD8(+) T-cell-mediated adaptive immune responses by amplifying T-cell activation. Stimulates perforin-mediated elimination of ligand-expressing tumor cells. Signaling involves calcium influx, culminating in the expression of TNF-alpha. Participates in NK cell-mediated bone marrow graft rejection. May play a regulatory role in differentiation and survival of NK cells. Binds to ligands belonging to various subfamilies of MHC class I-related glycoproteins. The protein is NKG2-D type II integral membrane protein (KLRK1) of Macaca fascicularis (Crab-eating macaque).